A 294-amino-acid chain; its full sequence is MIEVLTTDSQKLLHQLNTLLEQESRCQPKVCGLKLIESAHDNGLRMTARLRDFEVKDLLSLTQFFGFDTETFSLAVNLLDRFLSKMKVQAKHLGCVGLSCFYLAVKSIEEERNVPLATDLIRISQYRFTVSDLMRMEKIVLEKVCWKVKATTAFQFLQLYYSLIRETLPFERRNDLNFERLEAQLKACHCRIIFSKAKPSVLALAIIALEIQALKYVELTEGVECIQKHSKISGRDLTFWQELVSKCLTEYSSNKCSKPNGQKLKWIVSGRTARQLKHSYYRITHLPTIPETMG.

It belongs to the cyclin family. Cyclin G subfamily.

It is found in the nucleus. Functionally, may play a role in growth regulation. Is associated with G2/M phase arrest in response to DNA damage. May be an intermediate by which p53 mediates its role as an inhibitor of cellular proliferation. This chain is Cyclin-G1 (Ccng1), found in Rattus norvegicus (Rat).